Here is a 469-residue protein sequence, read N- to C-terminus: 3-isopropylmalate dehydratase large subunit (469 aa).

Cys-349, Cys-410, and Cys-413 together coordinate [4Fe-4S] cluster.

Belongs to the aconitase/IPM isomerase family. LeuC type 1 subfamily. Heterodimer of LeuC and LeuD. [4Fe-4S] cluster is required as a cofactor.

It catalyses the reaction (2R,3S)-3-isopropylmalate = (2S)-2-isopropylmalate. It participates in amino-acid biosynthesis; L-leucine biosynthesis; L-leucine from 3-methyl-2-oxobutanoate: step 2/4. Catalyzes the isomerization between 2-isopropylmalate and 3-isopropylmalate, via the formation of 2-isopropylmaleate. The protein is 3-isopropylmalate dehydratase large subunit of Neisseria meningitidis serogroup C / serotype 2a (strain ATCC 700532 / DSM 15464 / FAM18).